The sequence spans 76 residues: UPF0346 protein OEOE_1017 (76 aa).

This sequence belongs to the UPF0346 family.

The sequence is that of UPF0346 protein OEOE_1017 from Oenococcus oeni (strain ATCC BAA-331 / PSU-1).